Here is a 104-residue protein sequence, read N- to C-terminus: uncharacterized protein (104 aa).

Residues 42 to 104 are a coiled coil; that stretch reads ARDSFDQDFE…AREERHKLGR (63 aa).

It belongs to the WXG100 family.

This is an uncharacterized protein from Bacillus subtilis (strain 168).